Consider the following 134-residue polypeptide: QEGDAAKGEKEFNKCKACHMVQAPDGTDIVKGGKTGPNLYGVVGRKIASEEGFKYGDGILEVAEKNPDLVWTEADLIEYVTDPKPWLVEKTGDSAAKTKMTFKLGKNQADVVAFLAQNSPDAGAEAAPAEDAAD.

Residue glutamine 1 is modified to Pyrrolidone carboxylic acid. Heme c contacts are provided by cysteine 15, cysteine 18, histidine 19, and methionine 100.

Post-translationally, binds 1 heme c group covalently per subunit.

In terms of biological role, electron donor for nitrous-oxide reductase. This Paracoccus pantotrophus (Thiosphaera pantotropha) protein is Cytochrome c-550.